The following is a 153-amino-acid chain: Transcriptional repressor NrdR (153 aa).

A zinc finger lies at Cys-3–Cys-34. The region spanning Leu-49–Val-139 is the ATP-cone domain.

This sequence belongs to the NrdR family. Zn(2+) is required as a cofactor.

Its function is as follows. Negatively regulates transcription of bacterial ribonucleotide reductase nrd genes and operons by binding to NrdR-boxes. The chain is Transcriptional repressor NrdR from Bacillus cytotoxicus (strain DSM 22905 / CIP 110041 / 391-98 / NVH 391-98).